An 89-amino-acid polypeptide reads, in one-letter code: Small ribosomal subunit protein uS15 (89 aa).

It belongs to the universal ribosomal protein uS15 family. Part of the 30S ribosomal subunit. Forms a bridge to the 50S subunit in the 70S ribosome, contacting the 23S rRNA.

One of the primary rRNA binding proteins, it binds directly to 16S rRNA where it helps nucleate assembly of the platform of the 30S subunit by binding and bridging several RNA helices of the 16S rRNA. Functionally, forms an intersubunit bridge (bridge B4) with the 23S rRNA of the 50S subunit in the ribosome. The chain is Small ribosomal subunit protein uS15 from Salinispora arenicola (strain CNS-205).